Consider the following 465-residue polypeptide: MEPQPGGARSCRRGAPGGACELNTATESAAPMSLAIHSTTGTRYDLSVPHDETVEGLRKRLSQRLKVPKERLALLHKDTRLSSGKLQEFGVGDGSKLTLVPTVEAGLMSQASRPEQSVMQALESLTETQVSDFLSGRSPLTLALRVGDHMMFVQLQLAAQHAPLQHRHVLAAAAAAAAAARGDSSVATPVSSPCRPVSSAARVPPVSSSPSSPVSPSPVTAGSFRSHAASTTCPEQMDCSPPASSSSTSTPGSSPTPRSRKPGAVIESFVNHAPGVFSGTFSGTLHPNCQDSSGRPRRDIGTILQILNDLLSATRHYQGMPPSLTQLRCHAQCSPASPAPDLTPKTTSCEKLAATSSTSLLQGQSQIRMCKPPGDRLRQTENRATRCKVERLQLLLQQKRLRRKARRDARGPYHWTPSRKAGRSDSSSSGGGGGPSEATGLGLDFEDSVWKPEVNPDIQSEFVVA.

Positions 32–106 (MSLAIHSTTG…LTLVPTVEAG (75 aa)) constitute a Ubiquitin-like domain. Disordered stretches follow at residues 185 to 262 (SVAT…SRKP) and 400 to 445 (RLRR…GLDF). Composition is skewed to low complexity over residues 195–219 (RPVSSAARVPPVSSSPSSPVSPSPV) and 240–257 (SPPASSSSTSTPGSSPTP). The segment at 397–424 (QQKRLRRKARRDARGPYHWTPSRKAGRS) is required for nucleolar localization.

In terms of assembly, interacts with GCK; the interaction occurs preferentially at low glucose levels. Interacts with the proteasome. In terms of tissue distribution, expressed at high levels in brain and liver with significantly lower levels in muscle.

Its subcellular location is the nucleus. The protein localises to the cytoplasm. It is found in the cytosol. It localises to the nucleolus. In terms of biological role, facilitates the ubiquitin-independent proteasomal degradation of stimulus-induced transcription factors such as FOSB, EGR1, NR4A1, and IRF4 to the proteasome for degradation. Promotes also the degradation of other substrates such as CBX4. Plays a role in inhibiting the activity of glucokinase GCK and both glucose-induced and basal insulin secretion. This chain is Midnolin (Midn), found in Mus musculus (Mouse).